The following is a 557-amino-acid chain: Potassium-transporting ATPase potassium-binding subunit (557 aa).

The next 10 membrane-spanning stretches (helical) occupy residues 6-26 (IQLL…GLGL), 59-79 (ALSL…ILFF), 127-147 (AGLT…LLAL), 172-192 (LYVL…FGVV), 247-267 (ISNF…VFLY), 278-298 (WAIF…VWTF), 363-383 (IVFG…LLTV), 410-430 (ILGI…SVSV), 475-495 (VMIA…VLVI), and 520-540 (FYIL…FPVL).

This sequence belongs to the KdpA family. The system is composed of three essential subunits: KdpA, KdpB and KdpC.

It is found in the cell inner membrane. In terms of biological role, part of the high-affinity ATP-driven potassium transport (or Kdp) system, which catalyzes the hydrolysis of ATP coupled with the electrogenic transport of potassium into the cytoplasm. This subunit binds the periplasmic potassium ions and delivers the ions to the membrane domain of KdpB through an intramembrane tunnel. This is Potassium-transporting ATPase potassium-binding subunit from Leptospira interrogans serogroup Icterohaemorrhagiae serovar Lai (strain 56601).